Consider the following 429-residue polypeptide: Glutamate-1-semialdehyde 2,1-aminomutase 2 (429 aa).

N6-(pyridoxal phosphate)lysine is present on K268.

The protein belongs to the class-III pyridoxal-phosphate-dependent aminotransferase family. HemL subfamily. As to quaternary structure, homodimer. Pyridoxal 5'-phosphate is required as a cofactor.

It localises to the cytoplasm. The enzyme catalyses (S)-4-amino-5-oxopentanoate = 5-aminolevulinate. It participates in porphyrin-containing compound metabolism; protoporphyrin-IX biosynthesis; 5-aminolevulinate from L-glutamyl-tRNA(Glu): step 2/2. This Staphylococcus aureus (strain bovine RF122 / ET3-1) protein is Glutamate-1-semialdehyde 2,1-aminomutase 2.